We begin with the raw amino-acid sequence, 331 residues long: 6-phosphogluconolactonase (331 aa).

N6-acetyllysine is present on lysine 287.

It belongs to the cycloisomerase 2 family.

It carries out the reaction 6-phospho-D-glucono-1,5-lactone + H2O = 6-phospho-D-gluconate + H(+). The protein operates within carbohydrate degradation; pentose phosphate pathway; D-ribulose 5-phosphate from D-glucose 6-phosphate (oxidative stage): step 2/3. Its function is as follows. Catalyzes the hydrolysis of 6-phosphogluconolactone to 6-phosphogluconate. The polypeptide is 6-phosphogluconolactonase (Escherichia coli O8 (strain IAI1)).